Here is a 337-residue protein sequence, read N- to C-terminus: ADP-ribosylation factor GTPase-activating protein AGD12 (337 aa).

In terms of domain architecture, Arf-GAP spans Lys-15 to Thr-137. The C4-type zinc finger occupies Cys-30 to Cys-53. In terms of domain architecture, C2 spans Thr-164 to Phe-281. Ca(2+) is bound by residues Asp-250, Ser-253, and Asp-256.

The cofactor is Ca(2+). Expressed in roots, leaves, flowers and siliques. Low levels of expression in seeds and stems.

It is found in the golgi apparatus. The protein resides in the cell membrane. GTPase-activating protein (GAP) for ADP ribosylation factor (ARF). Binds phosphatidylinositol 3-monophosohate (PI-3-P) and anionic phospholipids. The sequence is that of ADP-ribosylation factor GTPase-activating protein AGD12 (AGD12) from Arabidopsis thaliana (Mouse-ear cress).